A 397-amino-acid polypeptide reads, in one-letter code: MGKEKFERKKPHVNIGTIGHIDHGKTTLTAAITKTAGLLGQGKFIAYDEIDKAPEEKERGITIATAHVEYETATRHYAHVDCPGHADYIKNMITGAAQMDGAIIVVAATDGPMPQTREHILLARQVGVPYIVVFLNKCDMVDDEELLELVELEVRELLTSYGFPGDDVPVVRGSALKALESDDPNSDACKPIRELLAACDSYIPEPQRDIDKPFLMPIEDVFSISGRGTVVTGRVERGVIKVGEEVEIVGIKDTTKSTCTGVEMFRKLLDQGQAGDNIGALLRGVKRDDVERGQVLAAPKSITPHRKFKAEVYVLSKEEGGRHTPFFSGYRPQFYFRTTDITGVITLEEGVEMVMPGDNATFNVELIAPIAMELGLRFAIREGGRTVGAGVVSEIVE.

The tr-type G domain occupies 10-207 (KPHVNIGTIG…ACDSYIPEPQ (198 aa)). The segment at 19–26 (GHIDHGKT) is G1. 19 to 26 (GHIDHGKT) lines the GTP pocket. Position 26 (T26) interacts with Mg(2+). Residues 60–64 (GITIA) form a G2 region. The G3 stretch occupies residues 81 to 84 (DCPG). GTP-binding positions include 81-85 (DCPGH) and 136-139 (NKCD). The tract at residues 136 to 139 (NKCD) is G4. The interval 174 to 176 (SAL) is G5.

It belongs to the TRAFAC class translation factor GTPase superfamily. Classic translation factor GTPase family. EF-Tu/EF-1A subfamily. As to quaternary structure, monomer.

Its subcellular location is the cytoplasm. It carries out the reaction GTP + H2O = GDP + phosphate + H(+). In terms of biological role, GTP hydrolase that promotes the GTP-dependent binding of aminoacyl-tRNA to the A-site of ribosomes during protein biosynthesis. This Nitratidesulfovibrio vulgaris (strain ATCC 29579 / DSM 644 / CCUG 34227 / NCIMB 8303 / VKM B-1760 / Hildenborough) (Desulfovibrio vulgaris) protein is Elongation factor Tu.